The chain runs to 94 residues: Pyrimidine/purine nucleoside phosphorylase (94 aa).

Belongs to the nucleoside phosphorylase PpnP family.

The catalysed reaction is a purine D-ribonucleoside + phosphate = a purine nucleobase + alpha-D-ribose 1-phosphate. It catalyses the reaction adenosine + phosphate = alpha-D-ribose 1-phosphate + adenine. The enzyme catalyses cytidine + phosphate = cytosine + alpha-D-ribose 1-phosphate. It carries out the reaction guanosine + phosphate = alpha-D-ribose 1-phosphate + guanine. The catalysed reaction is inosine + phosphate = alpha-D-ribose 1-phosphate + hypoxanthine. It catalyses the reaction thymidine + phosphate = 2-deoxy-alpha-D-ribose 1-phosphate + thymine. The enzyme catalyses uridine + phosphate = alpha-D-ribose 1-phosphate + uracil. It carries out the reaction xanthosine + phosphate = alpha-D-ribose 1-phosphate + xanthine. Functionally, catalyzes the phosphorolysis of diverse nucleosides, yielding D-ribose 1-phosphate and the respective free bases. Can use uridine, adenosine, guanosine, cytidine, thymidine, inosine and xanthosine as substrates. Also catalyzes the reverse reactions. The chain is Pyrimidine/purine nucleoside phosphorylase from Salmonella newport (strain SL254).